Consider the following 354-residue polypeptide: MASAQVPFSFPLAHFLIFVFVTSTITHLQQRIVKLQPLSEKELPMTTQMSSGNTESPEMRRDSEQHGNGELRGMFTINSIGRLGNQMGEYATLFALARMNGRLAFIPASMHNALAPIFRISLPVLHSDTAKKIPWQNYHLNDWMEERYRHIPGHFVRFTGYPCSWTFYHHLRPEILKEFTLHDHVREEAQAFLRGLRVNGSQPSTFVGVHVRRGDYVHVMPNVWKGVVADRGYLEKALDMFRARYSSPVFVVTSNGMAWCRENINASRGDVVFAGNGIEGSPAKDFALLTQCNHTIMTIGTFGIWAAYLAGGDTIYLANYTLPDSPFLKVFKPEAAFLPEWVGIPADLSPLLKH.

The Cytoplasmic portion of the chain corresponds to 1-5; the sequence is MASAQ. The helical; Signal-anchor for type II membrane protein transmembrane segment at 6–26 threads the bilayer; sequence VPFSFPLAHFLIFVFVTSTIT. Over 27–354 the chain is Lumenal; it reads HLQQRIVKLQ…PADLSPLLKH (328 aa). Positions 43 to 68 are disordered; the sequence is LPMTTQMSSGNTESPEMRRDSEQHGN. The span at 45 to 56 shows a compositional bias: polar residues; that stretch reads MTTQMSSGNTES. Residues 57–68 are compositionally biased toward basic and acidic residues; it reads PEMRRDSEQHGN. N199 is a glycosylation site (N-linked (GlcNAc...) asparagine).

The protein belongs to the glycosyltransferase 11 family. As to expression, specifically expressed in gut.

Its subcellular location is the golgi apparatus. It is found in the golgi stack membrane. The enzyme catalyses a beta-D-galactosyl-(1-&gt;3)-N-acetyl-beta-D-glucosaminyl derivative + GDP-beta-L-fucose = an alpha-L-Fuc-(1-&gt;2)-beta-D-Gal-(1-&gt;3)-beta-D-GlcNAc derivative + GDP + H(+). It catalyses the reaction a beta-D-galactosyl-(1-&gt;4)-N-acetyl-beta-D-glucosaminyl derivative + GDP-beta-L-fucose = an alpha-L-Fuc-(1-&gt;2)-beta-D-Gal-(1-&gt;4)-beta-D-GlcNAc derivative + GDP + H(+). The catalysed reaction is a ganglioside GM1 (d18:1(4E)) + GDP-beta-L-fucose = a ganglioside Fuc-GM1 (d18:1(4E)) + GDP + H(+). It carries out the reaction a globoside GalGb4Cer (d18:1(4E)) + GDP-beta-L-fucose = a globoside Globo-H (d18:1(4E)) + GDP + H(+). The enzyme catalyses a neolactoside nLc4Cer + GDP-beta-L-fucose = a neolactoside IV(2)-alpha-Fuc-nLc4Cer + GDP + H(+). It catalyses the reaction a neolactoside nLc4Cer(d18:1(4E)) + GDP-beta-L-fucose = a neolactoside IV(2)-alpha-Fuc-nLc4Cer(d18:1(4E)) + GDP + H(+). The catalysed reaction is a ganglioside GM1 + GDP-beta-L-fucose = a ganglioside Fuc-GM1 + GDP + H(+). It carries out the reaction a ganglioside GA1 + GDP-beta-L-fucose = a ganglioside Fuc-GA1 + GDP + H(+). The enzyme catalyses Lc4Cer + GDP-beta-L-fucose = alpha-L-fucosyl-(1-&gt;2)-beta-D-galactosyl-(1-&gt;3)-N-acetyl-beta-D-glucosaminyl-(1-&gt;3)-beta-D-galactosyl-(1-&gt;4)-beta-D-glucosyl-(1&lt;-&gt;1')-ceramide + GDP + H(+). It catalyses the reaction a beta-D-Gal-(1-&gt;3)-beta-D-GlcNAc-(1-&gt;3)-beta-D-Gal-(1-&gt;4)-beta-D-Glc-(1&lt;-&gt;1')-Cer(d18:1(4E)) + GDP-beta-L-fucose = alpha-L-fucosyl-(1-&gt;2)- beta-D-galactosyl-(1-&gt;3)-N-acetyl-beta-D-glucosaminyl-(1-&gt;3)-beta-D-galactosyl-(1-&gt;4)-beta-D-glucosyl-(1&lt;-&gt;1')-N-acylsphing-4-enine + GDP + H(+). The catalysed reaction is a ganglioside GD1b + GDP-beta-L-fucose = a ganglioside Fuc-GD1b + GDP + H(+). It carries out the reaction a lactoside III(4)-a-Fuc-Lc4Cer + GDP-beta-L-fucose = a lactoside IV(2),III(4)-a-[Fuc]2-Lc4Cer + GDP + H(+). The enzyme catalyses beta-D-galactosyl-(1-&gt;3)-N-acetyl-D-galactosamine + GDP-beta-L-fucose = alpha-L-fucosyl-(1-&gt;2)-beta-D-galactosyl-(1-&gt;3)-N-acetyl-D-galactosamine + GDP + H(+). It functions in the pathway protein modification; protein glycosylation. Catalyzes the transfer of L-fucose, from a guanosine diphosphate-beta-L-fucose, to the terminal galactose on both O- and N-linked glycans chains of cell surface glycoproteins and glycolipids and the resulting epitope regulates several processes such as cell-cell interaction including host-microbe interaction, cell surface expression and cell proliferation. Preferentially fucosylates gangliosides GA1 and GM1 in the antrum, cecum and colon and in the female reproductive organs. Fucosylated host glycoproteins or glycolipids mediate interaction with intestinal microbiota influencing its composition. Creates a soluble precursor oligosaccharide FuC-alpha ((1,2)Galbeta-) called the H antigen which is an essential substrate for the final step in the soluble ABO blood group antigen synthesis pathway. The sequence is that of Galactoside alpha-(1,2)-fucosyltransferase 2 from Rattus norvegicus (Rat).